Reading from the N-terminus, the 119-residue chain is Chorion class CA protein ERA.2 (119 aa).

The N-terminal stretch at 1-21 (MSKLVVFLFCIQVCFIQNVYS) is a signal peptide. Residues 22 to 55 (QCLGRVGPGGPPLGPYGGPLGGPGYGPVGYGGCG) are left arm. A central domain region spans residues 56–103 (GYGGSGIGNVAVAGELPVAGSTGVTGQVPVIGAVEFAGPACAVGSVSI). The tract at residues 104–119 (SGACGPTCGCGGSPFY) is right arm.

This sequence belongs to the chorion protein family.

Its function is as follows. This protein is one of many from the eggshell of the silk moth. The polypeptide is Chorion class CA protein ERA.2 (ERA.2) (Bombyx mori (Silk moth)).